Reading from the N-terminus, the 313-residue chain is Acetyl-coenzyme A carboxylase carboxyl transferase subunit beta (313 aa).

The CoA carboxyltransferase N-terminal domain maps to Leu24–Pro293.

This sequence belongs to the AccD/PCCB family. In terms of assembly, acetyl-CoA carboxylase is a heterohexamer composed of biotin carboxyl carrier protein (AccB), biotin carboxylase (AccC) and two subunits each of ACCase subunit alpha (AccA) and ACCase subunit beta (AccD).

The protein localises to the cytoplasm. The enzyme catalyses N(6)-carboxybiotinyl-L-lysyl-[protein] + acetyl-CoA = N(6)-biotinyl-L-lysyl-[protein] + malonyl-CoA. It participates in lipid metabolism; malonyl-CoA biosynthesis; malonyl-CoA from acetyl-CoA: step 1/1. In terms of biological role, component of the acetyl coenzyme A carboxylase (ACC) complex. Biotin carboxylase (BC) catalyzes the carboxylation of biotin on its carrier protein (BCCP) and then the CO(2) group is transferred by the transcarboxylase to acetyl-CoA to form malonyl-CoA. The polypeptide is Acetyl-coenzyme A carboxylase carboxyl transferase subunit beta (Bradyrhizobium diazoefficiens (strain JCM 10833 / BCRC 13528 / IAM 13628 / NBRC 14792 / USDA 110)).